The chain runs to 346 residues: Phosphoribosylformylglycinamidine cyclo-ligase (346 aa).

Belongs to the AIR synthase family.

The protein localises to the cytoplasm. The catalysed reaction is 2-formamido-N(1)-(5-O-phospho-beta-D-ribosyl)acetamidine + ATP = 5-amino-1-(5-phospho-beta-D-ribosyl)imidazole + ADP + phosphate + H(+). The protein operates within purine metabolism; IMP biosynthesis via de novo pathway; 5-amino-1-(5-phospho-D-ribosyl)imidazole from N(2)-formyl-N(1)-(5-phospho-D-ribosyl)glycinamide: step 2/2. The chain is Phosphoribosylformylglycinamidine cyclo-ligase from Geobacillus sp. (strain WCH70).